Reading from the N-terminus, the 132-residue chain is Protein p15 (132 aa).

Its function is as follows. May play a role in infectivity. The chain is Protein p15 from Panicum mosaic virus (strain United States/Kansas 109S) (PMV).